We begin with the raw amino-acid sequence, 209 residues long: MEGGGGSGNKTTGGLAGFFGAGGAGYSHADLAGVPLTGMNPLSPYLNVDPRYLVQDTDEFILPTGANKTRGRFELAFFTIGGCCMTGAAFGAMNGLRLGLKETQNMAWSKPRNVQILNMVTRQGALWANTLGSLALLYSAFGVIIEKTRGAEDDLNTVAAGTMTGMLYKCTGGLRGIARGGLTGLTLTSLYALYNNWEHMKGSLLQQSL.

Transmembrane regions (helical) follow at residues 73–93, 125–145, and 181–197; these read FELAFFTIGGCCMTGAAFGAM, ALWANTLGSLALLYSAFGVII, and GLTGLTLTSLYALYNNW.

Belongs to the Tim17/Tim22/Tim23 family. Component of the TIM23 complex at least composed of TIMM23, TIMM17 (TIMM17A or TIMM17B) and TIMM50; within this complex, directly interacts with TIMM50. The complex interacts with the TIMM44 component of the PAM complex and with DNAJC15. Upon mitochondrial depolarization, interacts with PINK1; the interaction is required for PINK1 accumulation at the outer mitochondrial membrane, kinase activation by autophosphorylation and PRKN recruitement to mitochondria.

The protein localises to the mitochondrion inner membrane. Essential component of the TIM23 complex, a complex that mediates the translocation of transit peptide-containing proteins across the mitochondrial inner membrane. Has a role in the activation of stress-induced mitophagy by protecting PINK1 from OMA1-mediated degradation and facilitating its accumulation at the outer mitochondrial membrane in response to depolarization. This is Mitochondrial import inner membrane translocase subunit Tim23 (TIMM23) from Homo sapiens (Human).